The chain runs to 158 residues: Sec-independent protein translocase protein TatB (158 aa).

The helical transmembrane segment at 2-22 threads the bilayer; sequence FDGIGFMELLLIGVLGLVVLG. Residues 86-158 are disordered; the sequence is LKQAAQSVNR…DTSSNPKANG (73 aa). Polar residues-rich tracts occupy residues 88–107, 113–136, and 143–158; these read QAAQSVNRPYQVQDSSSQGT, QIHSPAQVSQTNPTTPLETSQHLT, and EPSQGVDTSSNPKANG.

This sequence belongs to the TatB family. In terms of assembly, the Tat system comprises two distinct complexes: a TatABC complex, containing multiple copies of TatA, TatB and TatC subunits, and a separate TatA complex, containing only TatA subunits. Substrates initially bind to the TatABC complex, which probably triggers association of the separate TatA complex to form the active translocon.

The protein resides in the cell inner membrane. In terms of biological role, part of the twin-arginine translocation (Tat) system that transports large folded proteins containing a characteristic twin-arginine motif in their signal peptide across membranes. Together with TatC, TatB is part of a receptor directly interacting with Tat signal peptides. TatB may form an oligomeric binding site that transiently accommodates folded Tat precursor proteins before their translocation. This Shewanella putrefaciens (strain CN-32 / ATCC BAA-453) protein is Sec-independent protein translocase protein TatB.